A 357-amino-acid polypeptide reads, in one-letter code: Biotin synthase (357 aa).

The interval 1 to 27 is disordered; sequence MTTAETKPATETGENAGTTGTAGTAAT. Over residues 9-27 the composition is skewed to low complexity; sequence ATETGENAGTTGTAGTAAT. One can recognise a Radical SAM core domain in the interval 78-303; that stretch reads DAVEMEGIIS…RQLLRFAGGR (226 aa). [4Fe-4S] cluster contacts are provided by C93, C97, and C100. [2Fe-2S] cluster is bound by residues C136, C228, and R298.

The protein belongs to the radical SAM superfamily. Biotin synthase family. In terms of assembly, homodimer. The cofactor is [4Fe-4S] cluster. It depends on [2Fe-2S] cluster as a cofactor.

It carries out the reaction (4R,5S)-dethiobiotin + (sulfur carrier)-SH + 2 reduced [2Fe-2S]-[ferredoxin] + 2 S-adenosyl-L-methionine = (sulfur carrier)-H + biotin + 2 5'-deoxyadenosine + 2 L-methionine + 2 oxidized [2Fe-2S]-[ferredoxin]. It participates in cofactor biosynthesis; biotin biosynthesis; biotin from 7,8-diaminononanoate: step 2/2. Functionally, catalyzes the conversion of dethiobiotin (DTB) to biotin by the insertion of a sulfur atom into dethiobiotin via a radical-based mechanism. In Corynebacterium jeikeium (strain K411), this protein is Biotin synthase.